Here is a 142-residue protein sequence, read N- to C-terminus: Transcriptional regulator MraZ (142 aa).

2 SpoVT-AbrB domains span residues 5–47 (THTP…PAPE) and 76–119 (AHDE…DRVA).

This sequence belongs to the MraZ family. Forms oligomers.

The protein resides in the cytoplasm. It is found in the nucleoid. The protein is Transcriptional regulator MraZ of Salinispora arenicola (strain CNS-205).